We begin with the raw amino-acid sequence, 361 residues long: Phosphoserine aminotransferase (361 aa).

Arginine 42 is a binding site for L-glutamate. Pyridoxal 5'-phosphate is bound by residues alanine 76–threonine 77, tryptophan 102, threonine 152, aspartate 172, and glutamine 195. Lysine 196 carries the post-translational modification N6-(pyridoxal phosphate)lysine. Residue asparagine 237–threonine 238 coordinates pyridoxal 5'-phosphate.

It belongs to the class-V pyridoxal-phosphate-dependent aminotransferase family. SerC subfamily. Homodimer. The cofactor is pyridoxal 5'-phosphate.

Its subcellular location is the cytoplasm. The catalysed reaction is O-phospho-L-serine + 2-oxoglutarate = 3-phosphooxypyruvate + L-glutamate. It catalyses the reaction 4-(phosphooxy)-L-threonine + 2-oxoglutarate = (R)-3-hydroxy-2-oxo-4-phosphooxybutanoate + L-glutamate. Its pathway is amino-acid biosynthesis; L-serine biosynthesis; L-serine from 3-phospho-D-glycerate: step 2/3. The protein operates within cofactor biosynthesis; pyridoxine 5'-phosphate biosynthesis; pyridoxine 5'-phosphate from D-erythrose 4-phosphate: step 3/5. Its function is as follows. Catalyzes the reversible conversion of 3-phosphohydroxypyruvate to phosphoserine and of 3-hydroxy-2-oxo-4-phosphonooxybutanoate to phosphohydroxythreonine. The polypeptide is Phosphoserine aminotransferase (Stenotrophomonas maltophilia (strain K279a)).